Consider the following 146-residue polypeptide: Snake venom vascular endothelial growth factor toxin TfsvVEGF (146 aa).

Positions 1-24 (MAAYLLAVAILFCIQGWPSGTVQG) are cleaved as a signal peptide. At Gln-25 the chain carries Pyrrolidone carboxylic acid. Disulfide bonds link Cys-38–Cys-80, Cys-69–Cys-115, and Cys-73–Cys-117. Positions 118–139 (RPRSPGDVNNGKDKRNPEEGGP) are enriched in basic and acidic residues. The tract at residues 118–146 (RPRSPGDVNNGKDKRNPEEGGPRARFPFV) is disordered.

The protein belongs to the PDGF/VEGF growth factor family. Snake venom VEGF subfamily. As to quaternary structure, homodimer; disulfide-linked. Interacts with VEGF receptor-1 (FLT1) with a high affinity, whereas it binds to VEGF receptor-2 (KDR) with a low affinity. Does not bind VEGF receptor-3 (FLT4). Expressed by the venom gland.

Its subcellular location is the secreted. In terms of biological role, snake venom VEGFs may contribute to venom dispersion and prey subjugation by inducing vascular permeability and hypotension. This protein strongly increases vascular permeability, and weakly stimulates angiogenesis. Interacts with VEGF receptor-1 (FLT1) with a high affinity, whereas it binds to VEGF receptor-2 (KDR) with a low affinity. Stimulates autophosphorylation of VEGF receptor-1 (VEGFR-1/FLT1), and VEGF receptor-2 (VEGFR-2/KDR). This is Snake venom vascular endothelial growth factor toxin TfsvVEGF from Protobothrops flavoviridis (Habu).